The sequence spans 159 residues: Ribosomal RNA large subunit methyltransferase H (159 aa).

S-adenosyl-L-methionine is bound by residues leucine 76 and glycine 108.

Belongs to the RNA methyltransferase RlmH family. Homodimer.

It localises to the cytoplasm. The catalysed reaction is pseudouridine(1915) in 23S rRNA + S-adenosyl-L-methionine = N(3)-methylpseudouridine(1915) in 23S rRNA + S-adenosyl-L-homocysteine + H(+). Its function is as follows. Specifically methylates the pseudouridine at position 1915 (m3Psi1915) in 23S rRNA. In Lactiplantibacillus plantarum (strain ATCC BAA-793 / NCIMB 8826 / WCFS1) (Lactobacillus plantarum), this protein is Ribosomal RNA large subunit methyltransferase H.